A 299-amino-acid polypeptide reads, in one-letter code: Bifunctional protein FolD 1 (299 aa).

Residues Gly168 to Ser170, Ser193, and Ile234 each bind NADP(+).

This sequence belongs to the tetrahydrofolate dehydrogenase/cyclohydrolase family. Homodimer.

The catalysed reaction is (6R)-5,10-methylene-5,6,7,8-tetrahydrofolate + NADP(+) = (6R)-5,10-methenyltetrahydrofolate + NADPH. It carries out the reaction (6R)-5,10-methenyltetrahydrofolate + H2O = (6R)-10-formyltetrahydrofolate + H(+). Its pathway is one-carbon metabolism; tetrahydrofolate interconversion. Catalyzes the oxidation of 5,10-methylenetetrahydrofolate to 5,10-methenyltetrahydrofolate and then the hydrolysis of 5,10-methenyltetrahydrofolate to 10-formyltetrahydrofolate. The protein is Bifunctional protein FolD 1 of Rhizobium etli (strain ATCC 51251 / DSM 11541 / JCM 21823 / NBRC 15573 / CFN 42).